The primary structure comprises 255 residues: Phosphate import ATP-binding protein PstB (255 aa).

Residues 8–250 (IKSSNLNVHY…PGNKMTQDYI (243 aa)) enclose the ABC transporter domain. Residue 40 to 47 (GPSGCGKS) coordinates ATP.

It belongs to the ABC transporter superfamily. Phosphate importer (TC 3.A.1.7) family. As to quaternary structure, the complex is composed of two ATP-binding proteins (PstB), two transmembrane proteins (PstC and PstA) and a solute-binding protein (PstS).

The protein resides in the cell inner membrane. It carries out the reaction phosphate(out) + ATP + H2O = ADP + 2 phosphate(in) + H(+). Part of the ABC transporter complex PstSACB involved in phosphate import. Responsible for energy coupling to the transport system. In Pelagibacter ubique (strain HTCC1062), this protein is Phosphate import ATP-binding protein PstB.